Consider the following 239-residue polypeptide: tRNA (guanine-N(1)-)-methyltransferase (239 aa).

S-adenosyl-L-methionine is bound by residues G108 and 127 to 132 (IGDYVL).

The protein belongs to the RNA methyltransferase TrmD family. Homodimer.

The protein localises to the cytoplasm. It carries out the reaction guanosine(37) in tRNA + S-adenosyl-L-methionine = N(1)-methylguanosine(37) in tRNA + S-adenosyl-L-homocysteine + H(+). Functionally, specifically methylates guanosine-37 in various tRNAs. In Lactobacillus helveticus (strain DPC 4571), this protein is tRNA (guanine-N(1)-)-methyltransferase.